Reading from the N-terminus, the 73-residue chain is Small ribosomal subunit protein bS18c (73 aa).

The protein belongs to the bacterial ribosomal protein bS18 family. In terms of assembly, part of the 30S ribosomal subunit.

It is found in the plastid. Its subcellular location is the chloroplast. The sequence is that of Small ribosomal subunit protein bS18c (rps18) from Guillardia theta (Cryptophyte).